A 287-amino-acid chain; its full sequence is Eukaryotic translation initiation factor 3 subunit F (287 aa).

The 131-residue stretch at 12-142 folds into the MPN domain; it reads VRVHPVVLFQ…IKAYVCVSLG (131 aa).

It belongs to the eIF-3 subunit F family. As to quaternary structure, component of the eukaryotic translation initiation factor 3 (eIF-3) complex.

The protein resides in the cytoplasm. In terms of biological role, component of the eukaryotic translation initiation factor 3 (eIF-3) complex, which is involved in protein synthesis of a specialized repertoire of mRNAs and, together with other initiation factors, stimulates binding of mRNA and methionyl-tRNAi to the 40S ribosome. The eIF-3 complex specifically targets and initiates translation of a subset of mRNAs involved in cell proliferation. The sequence is that of Eukaryotic translation initiation factor 3 subunit F from Anopheles gambiae (African malaria mosquito).